Consider the following 661-residue polypeptide: 1-deoxy-D-xylulose-5-phosphate synthase (661 aa).

Thiamine diphosphate-binding positions include His-98 and 139 to 141 (AHS). Asp-170 is a Mg(2+) binding site. Residues 171-172 (GA), Asn-199, Tyr-309, and Glu-391 contribute to the thiamine diphosphate site. A Mg(2+)-binding site is contributed by Asn-199.

The protein belongs to the transketolase family. DXPS subfamily. Homodimer. Mg(2+) is required as a cofactor. Requires thiamine diphosphate as cofactor.

The enzyme catalyses D-glyceraldehyde 3-phosphate + pyruvate + H(+) = 1-deoxy-D-xylulose 5-phosphate + CO2. The protein operates within metabolic intermediate biosynthesis; 1-deoxy-D-xylulose 5-phosphate biosynthesis; 1-deoxy-D-xylulose 5-phosphate from D-glyceraldehyde 3-phosphate and pyruvate: step 1/1. Catalyzes the acyloin condensation reaction between C atoms 2 and 3 of pyruvate and glyceraldehyde 3-phosphate to yield 1-deoxy-D-xylulose-5-phosphate (DXP). The sequence is that of 1-deoxy-D-xylulose-5-phosphate synthase from Bradyrhizobium diazoefficiens (strain JCM 10833 / BCRC 13528 / IAM 13628 / NBRC 14792 / USDA 110).